The primary structure comprises 356 residues: Heparan sulfate 2-O-sulfotransferase 1 (356 aa).

At 1–11 (MGLLRIMMPPK) the chain is on the cytoplasmic side. The chain crosses the membrane as a helical; Signal-anchor for type II membrane protein span at residues 12–28 (LQLLAVVAFAVAMLFLE). Residues 24 to 51 (MLFLENQIQKLEESRSKLERAIARHEVR) are a coiled coil. Residues 29–356 (NQIQKLEESR…FYEKIYPKSN (328 aa)) are Lumenal-facing. 6 residues coordinate adenosine 3',5'-bisphosphate: Lys83, Thr84, Ala85, Ser86, Thr87, and Ser88. N-linked (GlcNAc...) asparagine glycans are attached at residues Asn108 and Asn127. Residues His140 and His142 contribute to the active site. 2 residues coordinate adenosine 3',5'-bisphosphate: Arg164 and Ser172. 2 disulfides stabilise this stretch: Cys201/Cys209 and Cys222/Cys228. Adenosine 3',5'-bisphosphate contacts are provided by Tyr279, Ser285, Thr290, and Lys293.

It belongs to the sulfotransferase 3 family. Homotrimer. Interacts with the C5-epimerase GLCE. Post-translationally, N-glycosylated.

It localises to the golgi apparatus membrane. Catalyzes the transfer of a sulfo group from 3'-phospho-5'-adenylyl sulfate (PAPS) to the 2-OH position of iduronic acid (IdoA) or glucuronic acid (GlcA) within the heparan sulfate (HS) chain and participates in HS biosynthesis. Required for metanephric development of kidney formation, suggesting that 2-O-sulfation within HS is essential for signaling between ureteric bud and metanephric mesenchyme. This is Heparan sulfate 2-O-sulfotransferase 1 from Pongo abelii (Sumatran orangutan).